The following is a 441-amino-acid chain: G-protein coupled receptor family C group 5 member C (441 aa).

Residues 1–23 (MAIHKALVMCLGLPLFLFPGAWA) form the signal peptide. Residues 24–50 (QGHVPPGCSQGLNPLYYNLCDRSGAWG) are Extracellular-facing. Residues 51 to 71 (IVLEAVAGAGIVTTFVLTIIL) form a helical membrane-spanning segment. Residues 72 to 85 (VASLPFVQDTKKRS) lie on the Cytoplasmic side of the membrane. The helical transmembrane segment at 86 to 106 (LLGTQVFFLLGTLGLFCLVFA) threads the bilayer. Residues 107 to 120 (CVVKPDFSTCASRR) are Extracellular-facing. The helical transmembrane segment at 121-141 (FLFGVLFAICFSCLAAHVFAL) threads the bilayer. Over 142–155 (NFLARKNHGPRGWV) the chain is Cytoplasmic. A helical membrane pass occupies residues 156–176 (IFTVALLLTLVEVIINTEWLI). Residues 177-208 (ITLVRGSGEGGPQGNSSAGWAVASPCAIANMD) lie on the Extracellular side of the membrane. Residue Asn191 is glycosylated (N-linked (GlcNAc...) asparagine). The helical transmembrane segment at 209 to 229 (FVMALIYVMLLLLGAFLGAWP) threads the bilayer. The Cytoplasmic segment spans residues 230–241 (ALCGRYKRWRKH). A helical transmembrane segment spans residues 242 to 262 (GVFVLLTTATSVAIWVVWIVM). Over 263 to 279 (YTYGNKQHNSPTWDDPT) the chain is Extracellular. The chain crosses the membrane as a helical span at residues 280–300 (LAIALAANAWAFVLFYVIPEV). Residues 301 to 441 (SQVTKSSPEQ…QVFRNPYVWD (141 aa)) lie on the Cytoplasmic side of the membrane. Residues Ser344, Ser383, Ser403, and Ser406 each carry the phosphoserine modification. Residues 412-441 (DMYSAQSHQAATPPKDGKNSQVFRNPYVWD) form a disordered region. Tyr414 is modified (phosphotyrosine). The residue at position 423 (Thr423) is a Phosphothreonine.

This sequence belongs to the G-protein coupled receptor 3 family. Expression is highest in the periphery, particularly in the stomach, but also in the kidney, liver, pancreas, and prostate. In brain, levels of expression are generally lower than in the periphery, with the exception of cerebellum, spinal cord, and dorsal root ganglia (DRG).

It localises to the cell membrane. The protein resides in the cytoplasmic vesicle membrane. In terms of biological role, this retinoic acid-inducible G-protein coupled receptor provide evidence for a possible interaction between retinoid and G-protein signaling pathways. The protein is G-protein coupled receptor family C group 5 member C (GPRC5C) of Homo sapiens (Human).